The following is a 247-amino-acid chain: Uridylate kinase (247 aa).

14 to 17 (KLSG) contributes to the ATP binding site. The segment at 22–27 (GERGVG) is involved in allosteric activation by GTP. Gly56 contacts UMP. 2 residues coordinate ATP: Gly57 and Arg61. Residues Asp76 and 137–144 (IGSPYFST) each bind UMP. Positions 165, 171, and 174 each coordinate ATP.

This sequence belongs to the UMP kinase family. As to quaternary structure, homohexamer.

It localises to the cytoplasm. The enzyme catalyses UMP + ATP = UDP + ADP. Its pathway is pyrimidine metabolism; CTP biosynthesis via de novo pathway; UDP from UMP (UMPK route): step 1/1. With respect to regulation, allosterically activated by GTP. Inhibited by UTP, 5-bromo-UTP and 5-iodo-UTP. Functionally, catalyzes the reversible phosphorylation of UMP to UDP, with ATP as the most efficient phosphate donor. The polypeptide is Uridylate kinase (pyrH) (Streptococcus pneumoniae serotype 4 (strain ATCC BAA-334 / TIGR4)).